The following is a 1596-amino-acid chain: Transcription factor Zelda (1596 aa).

Disordered regions lie at residues 1-143 (MTSI…QQQQ), 209-273 (SGLG…GGAA), and 490-530 (TSPA…SVLP). The span at 13–24 (AAEALASSSATD) shows a compositional bias: low complexity. Residues 25-53 (SGGGGAGGGGGGGGGGSGGPGAGGTGGVG) show a composition bias toward gly residues. Positions 60–72 (NATISAAADSSDN) are enriched in polar residues. 2 stretches are compositionally biased toward low complexity: residues 73 to 123 (QPGT…ITHQ) and 226 to 267 (SAPS…QTPG). Over residues 501–518 (GGPGQEGAAGAAPGGGYR) the composition is skewed to gly residues. The C2H2-type 1 zinc-finger motif lies at 552 to 576 (YNCTACNKWFTSSGHLKRHYNTTLH). Disordered regions lie at residues 578-813 (NAVK…TTTA), 825-945 (EDSN…MGML), 1017-1074 (GEQH…MPLT), and 1252-1322 (QMQH…TTLP). Over residues 610–634 (RGNAAAAAAAAAAAASASGQGQQQQ) the composition is skewed to low complexity. A compositionally biased stretch (pro residues) spans 635–653 (PPIPPPPANVPPPEPPRSP). Residues 656 to 668 (YGGGGGLGVGAMG) show a composition bias toward gly residues. Polar residues predominate over residues 673 to 682 (SQYSASPSPT). Composition is skewed to low complexity over residues 683–709 (QQQQ…GYGY) and 719–753 (NASP…HHNS). Residues 768-781 (PHNNNTTQMPSSQM) are compositionally biased toward polar residues. Positions 796-813 (TTTRAPQITTTATTTTTA) are enriched in low complexity. Residues 830-840 (THTHTHTHPNH) are compositionally biased toward basic residues. A compositionally biased stretch (low complexity) spans 849–858 (SSSSSSSMAT). Residues 864–877 (QELRDQEQADDHLH) are compositionally biased toward basic and acidic residues. Residues 879 to 916 (HQQASQQYLLSARHYHSSTPNTLSSSNTNPSTPSSNSP) are compositionally biased toward low complexity. Residues 904–1297 (SNTNPSTPSS…PLAKKRRGGN (394 aa)) are transactivation activation domain (TAD). Residues 921-932 (RQEQQGTDFSRT) are compositionally biased toward polar residues. Positions 933 to 944 (TPPPQPLPPMGM) are enriched in pro residues. Residues 1019–1036 (QHQRQEADHHQQQRELHQ) are compositionally biased toward basic and acidic residues. Composition is skewed to low complexity over residues 1037 to 1062 (LDQQ…SPTS) and 1252 to 1275 (QMQH…QQQQ). 2 stretches are compositionally biased toward polar residues: residues 1276 to 1286 (ILADQTQTMAQ) and 1309 to 1322 (SSVG…TTLP). The segment at 1326–1349 (IKCLECDKEFTKNCYLTQHNKSFH) adopts a C2H2-type 2 zinc-finger fold. A C2H2-type 3; degenerate zinc finger spans residues 1355 to 1378 (FRCQKCGKRFQSEDVYTTHLGRHR). 2 C2H2-type zinc fingers span residues 1384–1407 (HKCE…EAIH) and 1413–1435 (HMCD…LETH).

In terms of tissue distribution, zygotically expressed in the developing embryonic germ layers, nervous system, imaginal disk primordia and in larval wing and eye disks. Detected in the germline cells of the ovary, in unfertilized eggs and throughout early development. Later, it becomes mostly restricted to the nervous system and specific head regions. Also expressed in imaginal wing disks in third instar larvae.

It localises to the nucleus. The protein resides in the chromosome. Functionally, transcription factor required for zygotic genome activation (ZGA), a critical event in early embryonic development during which the developmental control passes from maternally provided mRNAs to the expression of the zygotic genome after fertilization. Binds to regulatory DNA sequences containing a 5'-CAGGTAG-3' sequence motif, which are highly enriched among developmental enhancers. Within 1 hour into development, or by the embryo's 8th nuclear cycle, binds the majority of its motifs genome-wide. Zelda-binding promotes nucleosome depletion and chromatin accessibility, thereby facilitating the binding of patterning transcription factors, including the binding of the dorsoventral patterning transcription factors dorsal (dl) and twist (twi), and the anteroposterior patterning transcription factors bicoid (bcd) and caudal (cad). Promotes the activity of patterning transcription factors, such as bcd and dl, by lowering the concentration threshold required for transcriptional activation. Required both for the earliest (minor) and major waves of transcription during ZGA. Also involved in maternal mRNA clearance during the maternal-to-zygote transition by promoting expression of microRNAs (miRNAs), such as miR-1, miR-9a and miR-309, which mediate degradation of maternally-loaded RNAs. Also involved in post-blastoderm development: nvolved in nervous system development by maintaining neuroblasts in an undifferentiated state and equired for wing disk development. Constitutes the main isoform expressed throughout development. Transcription factor required for zygotic genome activation (ZGA). Its function is as follows. Acts as a dominant negative inhibitor of transcription factor activity of isoform A. This is Transcription factor Zelda from Drosophila melanogaster (Fruit fly).